A 257-amino-acid chain; its full sequence is MTTMTSTASKLEVRDLNFFYGNFHALKGIQLEIAPRKVTAFIGPSGCGKSTLLRTFNRMYELYPGLRAEGEIMLDGQNILGRDIDVNLLRAKVGMVFQKPTPFPMSIYDNITFGVKLYEKLSKGEMEDRVEWALRKAALWDEVKDKLKQSGNSLSGGQQQRLCIARAVASKPEVLLLDEPTSALDPISTAHIEELIHELKEDYTIAIVTHNMQQAARVSDYTAYMYLGELVEFGNTDTIFTTPQKKATEDYITGKFG.

An ABC transporter domain is found at 11 to 252 (LEVRDLNFFY…PQKKATEDYI (242 aa)). Residue 43 to 50 (GPSGCGKS) coordinates ATP.

It belongs to the ABC transporter superfamily. Phosphate importer (TC 3.A.1.7) family. As to quaternary structure, the complex is composed of two ATP-binding proteins (PstB), two transmembrane proteins (PstC and PstA) and a solute-binding protein (PstS).

The protein localises to the cell inner membrane. It carries out the reaction phosphate(out) + ATP + H2O = ADP + 2 phosphate(in) + H(+). Its function is as follows. Part of the ABC transporter complex PstSACB involved in phosphate import. Responsible for energy coupling to the transport system. The polypeptide is Phosphate import ATP-binding protein PstB (Chromobacterium violaceum (strain ATCC 12472 / DSM 30191 / JCM 1249 / CCUG 213 / NBRC 12614 / NCIMB 9131 / NCTC 9757 / MK)).